The sequence spans 429 residues: Serine--tRNA ligase (429 aa).

Residue threonine 235–glutamate 237 coordinates L-serine. Arginine 266–glutamate 268 serves as a coordination point for ATP. Glutamate 289 is a binding site for L-serine. Glutamate 353–serine 356 lines the ATP pocket. Serine 389 is a binding site for L-serine.

Belongs to the class-II aminoacyl-tRNA synthetase family. Type-1 seryl-tRNA synthetase subfamily. In terms of assembly, homodimer. The tRNA molecule binds across the dimer.

Its subcellular location is the cytoplasm. The catalysed reaction is tRNA(Ser) + L-serine + ATP = L-seryl-tRNA(Ser) + AMP + diphosphate + H(+). It carries out the reaction tRNA(Sec) + L-serine + ATP = L-seryl-tRNA(Sec) + AMP + diphosphate + H(+). It participates in aminoacyl-tRNA biosynthesis; selenocysteinyl-tRNA(Sec) biosynthesis; L-seryl-tRNA(Sec) from L-serine and tRNA(Sec): step 1/1. Functionally, catalyzes the attachment of serine to tRNA(Ser). Is also able to aminoacylate tRNA(Sec) with serine, to form the misacylated tRNA L-seryl-tRNA(Sec), which will be further converted into selenocysteinyl-tRNA(Sec). This chain is Serine--tRNA ligase, found in Haemophilus influenzae (strain PittGG).